A 378-amino-acid chain; its full sequence is Protein arginine N-methyltransferase 6 (378 aa).

The segment at 1–46 (MSLSKKRKLESGDSGGAGAGGEGAEEENGGEQEAAPPRPRRTKSER) is disordered. Over residues 13–22 (DSGGAGAGGE) the composition is skewed to gly residues. R38 carries the asymmetric dimethylarginine; by autocatalysis modification. One can recognise an SAM-dependent MTase PRMT-type domain in the interval 47-377 (DQLYYECYSD…EEKTKDFAME (331 aa)). The S-adenosyl-L-methionine site is built by H60, R69, G93, E115, and E144. Catalysis depends on residues E158 and E167.

This sequence belongs to the class I-like SAM-binding methyltransferase superfamily. Protein arginine N-methyltransferase family. PRMT6 subfamily. As to quaternary structure, interacts with (and methylates) HIV-1 Tat, Rev and Nucleocapsid protein p7 (NC). Interacts with EPB41L3 and NCOA1. Automethylation enhances its stability.

The protein localises to the nucleus. The enzyme catalyses L-arginyl-[protein] + 2 S-adenosyl-L-methionine = N(omega),N(omega)-dimethyl-L-arginyl-[protein] + 2 S-adenosyl-L-homocysteine + 2 H(+). Its function is as follows. Arginine methyltransferase that can catalyze the formation of both omega-N monomethylarginine (MMA) and asymmetrical dimethylarginine (aDMA), with a strong preference for the formation of aDMA. Preferentially methylates arginyl residues present in a glycine and arginine-rich domain and displays preference for monomethylated substrates. Specifically mediates the asymmetric dimethylation of histone H3 'Arg-2' to form H3R2me2a. H3R2me2a represents a specific tag for epigenetic transcriptional repression and is mutually exclusive with methylation on histone H3 'Lys-4' (H3K4me2 and H3K4me3). Acts as a transcriptional repressor of various genes such as HOXA2, THBS1 and TP53. Repression of TP53 blocks cellular senescence. Also methylates histone H2A and H4 'Arg-3' (H2AR3me and H4R3me, respectively). Acts as a regulator of DNA base excision during DNA repair by mediating the methylation of DNA polymerase beta (POLB), leading to the stimulation of its polymerase activity by enhancing DNA binding and processivity. Methylates HMGA1. Regulates alternative splicing events. Acts as a transcriptional coactivator of a number of steroid hormone receptors including ESR1, ESR2, PGR and NR3C1. Promotes fasting-induced transcriptional activation of the gluconeogenic program through methylation of the CRTC2 transcription coactivator. Methylates GPS2, protecting GPS2 from ubiquitination and degradation. Methylates SIRT7, inhibiting SIRT7 histone deacetylase activity and promoting mitochondria biogenesis. This Mus musculus (Mouse) protein is Protein arginine N-methyltransferase 6 (Prmt6).